A 599-amino-acid chain; its full sequence is Calcium-dependent protein kinase 10 (599 aa).

The N-myristoyl glycine moiety is linked to residue glycine 2. The tract at residues 27–110 (RQDGDDALPG…PRPRVPPVKR (84 aa)) is disordered. A compositionally biased stretch (polar residues) spans 74–84 (VSTTDTASAEQ). Residues 87–98 (SKSSAGSDSGEA) are compositionally biased toward low complexity. Residues 133 to 391 (YSLGRKLGQG…AHEVLRHPWV (259 aa)) form the Protein kinase domain. ATP contacts are provided by residues 139–147 (LGQGQFGTT) and lysine 162. Aspartate 257 functions as the Proton acceptor in the catalytic mechanism. The segment at 397–427 (APDKPLDSAVLSRMKQFSAMNKLKKMALRVI) is autoinhibitory domain. 4 consecutive EF-hand domains span residues 434–469 (DEIA…VGAN), 470–505 (LQES…MNKI), 506–541 (ERED…FGLG), and 544–575 (QLEE…PTMG). Residues aspartate 447, aspartate 449, serine 451, glutamine 453, glutamate 458, aspartate 483, aspartate 485, serine 487, threonine 489, glutamate 494, aspartate 519, aspartate 521, serine 523, tyrosine 525, glutamate 530, aspartate 553, aspartate 555, aspartate 557, arginine 559, and glutamate 564 each coordinate Ca(2+).

It belongs to the protein kinase superfamily. Ser/Thr protein kinase family. CDPK subfamily. In terms of tissue distribution, expressed in roots.

The protein resides in the membrane. The catalysed reaction is L-seryl-[protein] + ATP = O-phospho-L-seryl-[protein] + ADP + H(+). It carries out the reaction L-threonyl-[protein] + ATP = O-phospho-L-threonyl-[protein] + ADP + H(+). Its activity is regulated as follows. Activated by calcium. Autophosphorylation may play an important role in the regulation of the kinase activity. May play a role in signal transduction pathways that involve calcium as a second messenger. In Oryza sativa subsp. japonica (Rice), this protein is Calcium-dependent protein kinase 10.